A 521-amino-acid polypeptide reads, in one-letter code: Protein DETOXIFICATION 44, chloroplastic (521 aa).

The transit peptide at 1-31 (MAAVATSFCFSPHRSPSRFGNPNSSIRRTIV) directs the protein to the chloroplast. A disordered region spans residues 12–73 (PHRSPSRFGN…DHDHKPDPGI (62 aa)). Polar residues-rich tracts occupy residues 18-27 (RFGNPNSSIR) and 42-61 (AVSTSSQRPEKQQNPLTSQN). A run of 12 helical transmembrane segments spans residues 80 to 100 (IMSIALPAALALAADPITSLV), 103 to 123 (AFVGHIGSAELAAVGVSVSVF), 167 to 187 (VSTSLVLAAGVGIAEAIALSL), 213 to 235 (RLRAYGAPPIVVALAAQGAFRGF), 242 to 262 (LYAVVAGNVLNAVLDPILIFV), 268 to 288 (SGAAAATVISEYLIAFILLWK), 314 to 334 (LLIGRTVALLVPFTLATSLAA), 345 to 365 (QIVLEIWLAVSLLTDALAIAA), 385 to 405 (LFGVLQVGLATGTGLAAVLFI), 423 to 443 (IALSGTLFVAGSQPVNALAFV), 454 to 474 (FGFAAYSMVIVGFISSLFMLV), and 481 to 503 (LAGIWTGLFLFMALRLVAGAWRL).

This sequence belongs to the multi antimicrobial extrusion (MATE) (TC 2.A.66.1) family. In terms of tissue distribution, expressed in shoots.

It localises to the plastid. The protein resides in the chloroplast membrane. The sequence is that of Protein DETOXIFICATION 44, chloroplastic from Arabidopsis thaliana (Mouse-ear cress).